The chain runs to 294 residues: NAD kinase (294 aa).

The active-site Proton acceptor is D74. NAD(+) is bound by residues 74 to 75 (DG), 148 to 149 (NE), H159, R176, D178, 189 to 194 (TAYSLS), and Q249.

Belongs to the NAD kinase family. It depends on a divalent metal cation as a cofactor.

Its subcellular location is the cytoplasm. It carries out the reaction NAD(+) + ATP = ADP + NADP(+) + H(+). Functionally, involved in the regulation of the intracellular balance of NAD and NADP, and is a key enzyme in the biosynthesis of NADP. Catalyzes specifically the phosphorylation on 2'-hydroxyl of the adenosine moiety of NAD to yield NADP. This Vibrio atlanticus (strain LGP32) (Vibrio splendidus (strain Mel32)) protein is NAD kinase.